Consider the following 373-residue polypeptide: Ubiquitin carboxyl-terminal hydrolase 50 (373 aa).

The USP domain maps to Thr-44–Gln-364. Cys-53 acts as the Nucleophile in catalysis. The active-site Proton acceptor is the His-322.

The protein belongs to the peptidase C19 family.

The protein resides in the cytoplasm. The protein localises to the cytoskeleton. It localises to the microtubule organizing center. It is found in the centrosome. Its subcellular location is the nucleus. The enzyme catalyses Thiol-dependent hydrolysis of ester, thioester, amide, peptide and isopeptide bonds formed by the C-terminal Gly of ubiquitin (a 76-residue protein attached to proteins as an intracellular targeting signal).. In terms of biological role, deubiquitinating enzyme that removes conjugated ubiquitin from specific proteins to regulate different cellular processes. Regulates the inflammasome signaling pathway by deubiquitinating 'Lys-63'-linked polyubiquitination of the PYCARD/ASC adapter protein. Regulates the ubiquitination and stability of the ACE2 protein. Acts as a negative regulator of the G2/M checkpoint pathway, by preventing serine/threonine kinase WEE1 degradation, thereby repressing entry into mitosis following activation of the G2/M DNA damage checkpoint. This Macaca fascicularis (Crab-eating macaque) protein is Ubiquitin carboxyl-terminal hydrolase 50 (USP50).